We begin with the raw amino-acid sequence, 430 residues long: Mitochondrial distribution and morphology protein 12 (430 aa).

The region spanning M1 to I430 is the SMP-LTD domain. Disordered stretches follow at residues D61–N117, T177–E276, and M352–S377. Residues F69–E82 show a composition bias toward acidic residues. Residues S85–N96 are compositionally biased toward basic and acidic residues. Polar residues-rich tracts occupy residues S211–I233 and A241–Q251. Residues P265–E276 show a composition bias toward basic and acidic residues.

The protein belongs to the MDM12 family. As to quaternary structure, component of the ER-mitochondria encounter structure (ERMES) or MDM complex, composed of MMM1, MDM10, MDM12 and MDM34. An MMM1 homodimer associates with one molecule of MDM12 on each side in a pairwise head-to-tail manner, and the SMP-LTD domains of MMM1 and MDM12 generate a continuous hydrophobic tunnel for phospholipid trafficking.

The protein localises to the mitochondrion outer membrane. Its subcellular location is the endoplasmic reticulum membrane. In terms of biological role, component of the ERMES/MDM complex, which serves as a molecular tether to connect the endoplasmic reticulum (ER) and mitochondria. Components of this complex are involved in the control of mitochondrial shape and protein biogenesis, and function in nonvesicular lipid trafficking between the ER and mitochondria. MDM12 is required for the interaction of the ER-resident membrane protein MMM1 and the outer mitochondrial membrane-resident beta-barrel protein MDM10. The MDM12-MMM1 subcomplex functions in the major beta-barrel assembly pathway that is responsible for biogenesis of all mitochondrial outer membrane beta-barrel proteins, and acts in a late step after the SAM complex. The MDM10-MDM12-MMM1 subcomplex further acts in the TOM40-specific pathway after the action of the MDM12-MMM1 complex. Essential for establishing and maintaining the structure of mitochondria and maintenance of mtDNA nucleoids. The chain is Mitochondrial distribution and morphology protein 12 from Ajellomyces capsulatus (strain G186AR / H82 / ATCC MYA-2454 / RMSCC 2432) (Darling's disease fungus).